Reading from the N-terminus, the 77-residue chain is Beta-defensin 135 (77 aa).

Positions 1 to 24 are cleaved as a signal peptide; it reads MATRSVLLALVVLNLLFYVPPGRS. Intrachain disulfides connect Cys37–Cys64, Cys44–Cys58, and Cys48–Cys65.

This sequence belongs to the beta-defensin family.

It localises to the secreted. Its function is as follows. Has antibacterial activity. The polypeptide is Beta-defensin 135 (DEFB135) (Homo sapiens (Human)).